The sequence spans 151 residues: Aspartate carbamoyltransferase regulatory chain (151 aa).

Zn(2+) contacts are provided by C108, C113, C138, and C141.

Belongs to the PyrI family. In terms of assembly, contains catalytic and regulatory chains. Zn(2+) is required as a cofactor.

Involved in allosteric regulation of aspartate carbamoyltransferase. In Pyrobaculum islandicum (strain DSM 4184 / JCM 9189 / GEO3), this protein is Aspartate carbamoyltransferase regulatory chain.